Reading from the N-terminus, the 980-residue chain is MADKGCEAAQSKDSSAPGSGEPRPKTEKELERERQKAAKLEKYHAKLAAKKAKEEARKPKLDKKAKIASPVAEYVEKTTPGEKKVLQDLDSPALKSYNPKAVESAWYDWWVKSGFFEPEFGPDGKPKKEGVFVITSPPPNVTGALHIGHALTIAIQDSLARWNRMLGKTVLFLGGFDHAGLSTQSVVEKKLWYTQKKTRHDYPRDKFVDIVWEWKEEYHNRIKNQMSRLGGSFDWTREAFTMDENLSRAVVETFVRLHEENIIYRANRLVNWCTALQTTLSNLEVENVDVPGRTLLKVPGYDEPVEVGVLTSIAYAVEGSDERIVIATTRPETLLGDTAVAVHPQDPRYKHLHGKFVKHPFCNRSIPIICDDIIVDMEFGTGAVKITPAHDPNDYEVGKRHNLEFINIFTDDGLLNENCGEFAGMKRFTARVKVVERLKELGLFVGTKENPMVIPLCGKTSDIIEPVMKPQWWVNQKEMAAAAAEVVKSGEIEIAPDMSRREFIRWMENIQDWCISRQLWWGHRIPAYFVNLADEPSQDRSEGRYWVTGRTLEQAEEKAKAAFPGKSFTLEQDEDVLDTWFSSGLWPFSTLGWPKDTSDYENFYPTTLMETGWDILFFWIARMVMLGLKLTGKIPFKRVFCHALVRDAQGRKMSKSLGNVVDPIDVIEGISLQALHDKLLVGNLDSREVEKAKKGQRLSYPKGIPQCGTDALRFTLCSLTTGGRDLNLDILRVEGYRKFCNKLYNATKFALGRLGSNFVPNKTADLTGNESLVEKWIFHRLNIAAAAMNKNMEEMNFLQATSAVHQFWLYELCDVYIENSKYLLSDGTEVQQESAKQTLYTVLDNALRLMHPFMPYVTEEMWQRLPRRPGDKTQTIVKAAFPVERVDYSNEIAAKYYESIITVVHSTRSMMAENGIKSDAVVYIHPDEEHSKLITSESASIQSLIKKCKTLSIVDNTFDSDKCVKNEVLEGSTIFLERNN.

Residues 1 to 40 (MADKGCEAAQSKDSSAPGSGEPRPKTEKELERERQKAAKL) form a disordered region. Residues 22–40 (PRPKTEKELERERQKAAKL) are compositionally biased toward basic and acidic residues. Residues 139 to 149 (PNVTGALHIGH) carry the 'HIGH' region motif. Positions 652 to 656 (KMSKS) match the 'KMSKS' region motif. K655 contacts ATP.

Belongs to the class-I aminoacyl-tRNA synthetase family.

It is found in the cytoplasm. The enzyme catalyses tRNA(Val) + L-valine + ATP = L-valyl-tRNA(Val) + AMP + diphosphate. In Schizosaccharomyces pombe (strain 972 / ATCC 24843) (Fission yeast), this protein is Valine--tRNA ligase (vas2).